The following is a 789-amino-acid chain: Toll-like receptor 6 (789 aa).

An N-terminal signal peptide occupies residues M1–A31. Residues D32 to T587 lie on the Extracellular side of the membrane. LRR repeat units lie at residues T54–G77, L78–D101, L102–N122, L123–Q147, L148–H168, L169–T196, K197–T219, L220–S250, L251–P277, V278–A303, L304–E330, M331–T354, F355–E378, L379–S404, L405–S428, I429–P449, R450–T473, L474–S495, and L496–N519. The cysteines at positions 117 and 139 are disulfide-linked. A glycan (N-linked (GlcNAc...) asparagine) is linked at N144. 2 N-linked (GlcNAc...) asparagine glycosylation sites follow: N186 and N214. The cysteines at positions 235 and 265 are disulfide-linked. N-linked (GlcNAc...) asparagine glycans are attached at residues N253 and N285. C348 and C373 form a disulfide bridge. N372 carries an N-linked (GlcNAc...) asparagine glycan. Residues C423 and C446 are joined by a disulfide bond. N433 carries an N-linked (GlcNAc...) asparagine glycan. N-linked (GlcNAc...) asparagine glycosylation occurs at N519. One can recognise an LRRCT domain in the interval I520–H575. The chain crosses the membrane as a helical span at residues V588–L608. Over D609–K789 the chain is Cytoplasmic. Residues L639–I780 enclose the TIR domain.

This sequence belongs to the Toll-like receptor family. In terms of assembly, homodimer (via cytoplasmic TIR domain). Heterodimer with TLR2 via their respective extracellular domains. Binds MYD88 via their respective TIR domains. Interacts with CD36, following CD36 stimulation by oxLDL or amyloid-beta 42, and forms a heterodimer with TLR4. The trimeric complex is internalized and triggers inflammatory response. LYN kinase activity facilitates TLR4:TLR6 heterodimerization and signal initiation. The heterodimer TLR2:TLR6 interacts with CD14 and CD36 in response to triacylated lipopeptides.

It localises to the cell membrane. The protein localises to the cytoplasmic vesicle. Its subcellular location is the phagosome membrane. It is found in the membrane raft. The protein resides in the golgi apparatus. Participates in the innate immune response to Gram-positive bacteria and fungi. Specifically recognizes diacylated and, to a lesser extent, triacylated lipopeptides. In response to diacylated lipopeptides, forms the activation cluster TLR2:TLR6:CD14:CD36, this cluster triggers signaling from the cell surface and subsequently is targeted to the Golgi in a lipid-raft dependent pathway. Acts via MYD88 and TRAF6, leading to NF-kappa-B activation, cytokine secretion and the inflammatory response. Recognizes mycoplasmal macrophage-activating lipopeptide-2kD (MALP-2), soluble tuberculosis factor (STF), phenol-soluble modulin (PSM) and B.burgdorferi outer surface protein A lipoprotein (OspA-L) cooperatively with TLR2. In complex with TLR4, promotes sterile inflammation in monocytes/macrophages in response to oxidized low-density lipoprotein (oxLDL) or amyloid-beta 42. In this context, the initial signal is provided by oxLDL- or amyloid-beta 42-binding to CD36. This event induces the formation of a heterodimer of TLR4 and TLR6, which is rapidly internalized and triggers inflammatory response, leading to the NF-kappa-B-dependent production of CXCL1, CXCL2 and CCL9 cytokines, via MYD88 signaling pathway, and CCL5 cytokine, via TICAM1 signaling pathway, as well as IL1B secretion. This is Toll-like receptor 6 (TLR6) from Dasypus novemcinctus (Nine-banded armadillo).